Reading from the N-terminus, the 29-residue chain is Lambda-theraphotoxin-Ec2a (29 aa).

Disulfide bonds link C2-C16, C9-C21, and C15-C25.

Belongs to the neurotoxin 30 (phrixotoxin) family. Expressed by the venom gland.

The protein localises to the secreted. Functionally, insect-selective neurotoxin that potently blocks insect calcium-activated potassium (BKCa) channels (Slo-type) in cockroach dorsal unpaired median (DUM) neurons (IC(50)=3.7 nM). This occurs in the absence of any shifts in the voltage dependence of activation. At high concentrations (330 nM), it partially inhibits cockroach delayed-rectifier potassium channels (Kv) currents. May interact with the turret and/or loop region of the external entrance to the channel and does not project deeply into the pore of the channel. In vivo, does not show toxicity in mice after intracerebroventricular injection of up to 25 pmol/g (1.8 ug/20 g mouse). The polypeptide is Lambda-theraphotoxin-Ec2a (Eucratoscelus constrictus (African red-rump baboon spider)).